The chain runs to 555 residues: Carboxylic ester hydrolase (555 aa).

Positions 1–19 (MELSVIALLLLGFVNFSWQ) are cleaved as a signal peptide. An intrachain disulfide couples cysteine 86 to cysteine 107. 2 N-linked (GlcNAc...) asparagine glycosylation sites follow: asparagine 120 and asparagine 144. Residue serine 211 is the Acyl-ester intermediate of the active site. Cysteine 263 and cysteine 274 form a disulfide bridge. Glutamate 336 (charge relay system) is an active-site residue. 2 N-linked (GlcNAc...) asparagine glycosylation sites follow: asparagine 369 and asparagine 397. The active-site Charge relay system is the histidine 459. Residues asparagine 473 and asparagine 533 are each glycosylated (N-linked (GlcNAc...) asparagine).

This sequence belongs to the type-B carboxylesterase/lipase family. In terms of processing, N-glycosylated. Expressed in several tissues, including epidermis (at protein level), fat body (at protein level), gut (at protein level), muscle (at protein level), and venom gland (at protein level).

The protein resides in the secreted. It carries out the reaction a carboxylic ester + H2O = an alcohol + a carboxylate + H(+). Its function is as follows. Lipolytic agent that may be involved in distributing the venom via degradation of blood triglycerides. The recombinant protein degrades triglycerides and exhibits high lipolytic activity toward long-chain triglycerides (tested on tributyrin, trioctanoin and triolein). Does not affect mammalian cells. The polypeptide is Carboxylic ester hydrolase (vCaE) (Bombus ignitus (Bumblebee)).